The primary structure comprises 193 residues: Glycerol-3-phosphate acyltransferase (193 aa).

The next 5 helical transmembrane spans lie at 4 to 24 (LALI…AVLI), 56 to 76 (GLVL…GYFL), 80 to 100 (PLLL…PLFF), 116 to 136 (APIG…IVLI), and 152 to 174 (PLFT…CLIV).

Belongs to the PlsY family. Probably interacts with PlsX.

It is found in the cell inner membrane. It catalyses the reaction an acyl phosphate + sn-glycerol 3-phosphate = a 1-acyl-sn-glycero-3-phosphate + phosphate. It functions in the pathway lipid metabolism; phospholipid metabolism. In terms of biological role, catalyzes the transfer of an acyl group from acyl-phosphate (acyl-PO(4)) to glycerol-3-phosphate (G3P) to form lysophosphatidic acid (LPA). This enzyme utilizes acyl-phosphate as fatty acyl donor, but not acyl-CoA or acyl-ACP. This Aliivibrio salmonicida (strain LFI1238) (Vibrio salmonicida (strain LFI1238)) protein is Glycerol-3-phosphate acyltransferase.